The primary structure comprises 321 residues: Cytochrome f (321 aa).

The N-terminal stretch at 1–35 is a signal peptide; that stretch reads MQNRKTYDDWVKKWITQSISVLIMIDIMTRTSIAN. The heme site is built by Tyr-37, Cys-57, Cys-60, and His-61. Residues 287–307 form a helical membrane-spanning segment; that stretch reads VQGLLLFLASVVLAQIFLVLK.

It belongs to the cytochrome f family. The 4 large subunits of the cytochrome b6-f complex are cytochrome b6, subunit IV (17 kDa polypeptide, petD), cytochrome f and the Rieske protein, while the 4 small subunits are PetG, PetL, PetM and PetN. The complex functions as a dimer. Heme is required as a cofactor.

The protein localises to the plastid. The protein resides in the chloroplast thylakoid membrane. Its function is as follows. Component of the cytochrome b6-f complex, which mediates electron transfer between photosystem II (PSII) and photosystem I (PSI), cyclic electron flow around PSI, and state transitions. This is Cytochrome f from Cryptomeria japonica (Japanese cedar).